We begin with the raw amino-acid sequence, 627 residues long: 1-deoxy-D-xylulose-5-phosphate synthase (627 aa).

Residues His87 and 128–130 (GHS) each bind thiamine diphosphate. Mg(2+) is bound at residue Asp159. Thiamine diphosphate contacts are provided by residues 160–161 (GA), Asn188, Phe295, and Glu375. Position 188 (Asn188) interacts with Mg(2+).

Belongs to the transketolase family. DXPS subfamily. Homodimer. It depends on Mg(2+) as a cofactor. Thiamine diphosphate serves as cofactor.

The catalysed reaction is D-glyceraldehyde 3-phosphate + pyruvate + H(+) = 1-deoxy-D-xylulose 5-phosphate + CO2. The protein operates within metabolic intermediate biosynthesis; 1-deoxy-D-xylulose 5-phosphate biosynthesis; 1-deoxy-D-xylulose 5-phosphate from D-glyceraldehyde 3-phosphate and pyruvate: step 1/1. Functionally, catalyzes the acyloin condensation reaction between C atoms 2 and 3 of pyruvate and glyceraldehyde 3-phosphate to yield 1-deoxy-D-xylulose-5-phosphate (DXP). This Pseudomonas aeruginosa (strain LESB58) protein is 1-deoxy-D-xylulose-5-phosphate synthase.